A 159-amino-acid polypeptide reads, in one-letter code: 17 kDa surface antigen (159 aa).

An N-terminal signal peptide occupies residues 1 to 19 (MKLLSKIMIIALAASMLQA). The N-palmitoyl cysteine moiety is linked to residue cysteine 20. A lipid anchor (S-diacylglycerol cysteine) is attached at cysteine 20.

This sequence belongs to the rickettsiale 17 kDa surface antigen family.

The protein localises to the cell outer membrane. In Rickettsia felis (strain ATCC VR-1525 / URRWXCal2) (Rickettsia azadi), this protein is 17 kDa surface antigen (omp).